The following is a 132-amino-acid chain: Large-conductance mechanosensitive channel (132 aa).

3 helical membrane passes run 14–34, 38–58, and 67–87; these read VVDL…VSSL, IITP…LHFG, and GNFI…FMFV.

This sequence belongs to the MscL family. In terms of assembly, homopentamer.

The protein localises to the cell membrane. Its function is as follows. Channel that opens in response to stretch forces in the membrane lipid bilayer. May participate in the regulation of osmotic pressure changes within the cell. The sequence is that of Large-conductance mechanosensitive channel from Bacillus cereus (strain ATCC 10987 / NRS 248).